A 147-amino-acid polypeptide reads, in one-letter code: Thyrotropin subunit beta (147 aa).

Positions 1–20 are cleaved as a signal peptide; it reads MRVVLLASGVLCLLAGQVLS. 6 disulfide bridges follow: Cys22/Cys72, Cys36/Cys87, Cys39/Cys126, Cys47/Cys103, Cys51/Cys105, and Cys108/Cys115. Asn43 is a glycosylation site (N-linked (GlcNAc...) asparagine).

Belongs to the glycoprotein hormones subunit beta family. Heterodimer of a common alpha chain and a unique beta chain which confers biological specificity to thyrotropin, lutropin, follitropin and gonadotropin.

The protein resides in the secreted. Functionally, indispensable for the control of thyroid structure and metabolism. May play some role in the biological processes of the immature fishes. In Anguilla japonica (Japanese eel), this protein is Thyrotropin subunit beta (tshb).